Consider the following 677-residue polypeptide: MAAHHRQNTAGRRKVQVSYVIRDEVEKYNRNGVNALQLDPALNRLFTAGRDSIIRIWSVNQHKQDPYIASMEHHTDWVNDIVLCCNGKTLISASSDTTVKVWNAHKGFCMSTLRTHKDYVKALAYAKDKELVASAGLDRQIFLWDVNTLTALTASNNTVTTSSLSGNKDSIYSLAMNQLGTIIVSGSTEKVLRVWDPRTCAKLMKLKGHTDNVKALLLNRDGTQCLSGSSDGTIRLWSLGQQRCIATYRVHDEGVWALQVNDAFTHVYSGGRDRKIYCTDLRNPDIRVLICEEKAPVLKMELDRSADPPPAIWVATTKSTVNKWILKGIHNFRASGDYDNDCTNPITPLCTQPDQVIKGGASIIQCHILNDKRHILTKDTNNNVAYWDVLKACKVEDLGKVDFEDEIKKRFKMVYVPNWFSVDLKTGMLTITLDESDCFAAWVSAKDAGFSSPDGSDPKLNLGGLLLQALLEYWPRTHVNPMDEEENEVNHVNGEQENRVQKGNGYFQVPPHTPVIFGEAGGRTLFRLLCRDSGGETESMLLNETVPQWVIDITVDKNMPKFNKIPFYLQPHASSGAKTLKKDRLSASDMLQVRKVMEHVYEKIINLDNESQTTSSSNNEKPGEQEKEEDIAVLAEEKIELLCQDQVLDPNMDLRTVKHFIWKSGGDLTLHYRQKST.

At Y28 the chain carries Phosphotyrosine. WD repeat units follow at residues 28-67, 73-112, 115-154, 166-205, 208-247, 250-289, 292-334, and 358-452; these read YNRNGVNALQLDPALNRLFTAGRDSIIRIWSVNQHKQDPY, HHTDWVNDIVLCCNGKTLISASSDTTVKVWNAHKGFCMST, THKDYVKALAYAKDKELVASAGLDRQIFLWDVNTLTALTA, GNKDSIYSLAMNQLGTIIVSGSTEKVLRVWDPRTCAKLMK, GHTDNVKALLLNRDGTQCLSGSSDGTIRLWSLGQQRCIAT, VHDEGVWALQVNDAFTHVYSGGRDRKIYCTDLRNPDIRVL, EEKA…NFRA, and KGGA…GFSS. An N6-acetyllysine modification is found at K214. N6-acetyllysine is present on K578. The interval 607–628 is disordered; it reads LDNESQTTSSSNNEKPGEQEKE. The span at 609-620 shows a compositional bias: low complexity; sequence NESQTTSSSNNE. T613 is subject to Phosphothreonine.

This sequence belongs to the WD repeat WDR48 family. Interacts with USP46. Interacts with USP1. Interacts with USP12. Component of the USP12-WDR20-WDR48 deubiquitinating complex. Component of the USP12-DMWD-WDR48 deubiquitinating complex. Interacts with PHLPP1. Interacts with RAD51AP1; the interaction is direct and promotes formation of a trimeric complex with RAD51 via RAD51AP1. Interacts with ATAD5; the interaction regulates USP1-mediated PCNA deubiquitination. Interacts with RAD51; the interaction is enhanced under replication stress. Interacts with ITCH; the interaction is more efficient when both USP12 and WDR48/UAF1 are involved and may facilitate recruitment of the USP12 deubiquitinating complex to Notch.

The protein resides in the nucleus. The protein localises to the cytoplasm. It localises to the lysosome. Its subcellular location is the late endosome. Regulator of deubiquitinating complexes, which acts as a strong activator of USP1, USP12 and USP46. Enhances the USP1-mediated deubiquitination of FANCD2; USP1 being almost inactive by itself. Activates deubiquitination by increasing the catalytic turnover without increasing the affinity of deubiquitinating enzymes for the substrate. Also activates deubiquitinating activity of complexes containing USP12. Docks at the distal end of the USP12 fingers domain and induces a cascade of structural changes leading to the activation of the enzyme. Together with RAD51AP1, promotes DNA repair by stimulating RAD51-mediated homologous recombination. Binds single-stranded DNA (ssDNA) and double-stranded DNA (dsDNA). DNA-binding is required both for USP1-mediated deubiquitination of FANCD2 and stimulation of RAD51-mediated homologous recombination: both WDR48/UAF1 and RAD51AP1 have coordinated role in DNA-binding during these processes. Together with ATAD5 and by regulating USP1 activity, has a role in PCNA-mediated translesion synthesis (TLS) by deubiquitinating monoubiquitinated PCNA. Together with ATAD5, has a role in recruiting RAD51 to stalled forks during replication stress. In Pongo abelii (Sumatran orangutan), this protein is WD repeat-containing protein 48 (WDR48).